The primary structure comprises 497 residues: Glycerol kinase (497 aa).

Residue Thr-12 participates in ADP binding. ATP-binding residues include Thr-12, Thr-13, and Ser-14. Sn-glycerol 3-phosphate is bound at residue Thr-12. Arg-16 provides a ligand contact to ADP. Residues Arg-82, Glu-83, Tyr-134, and Asp-243 each contribute to the sn-glycerol 3-phosphate site. Residues Arg-82, Glu-83, Tyr-134, Asp-243, and Gln-244 each coordinate glycerol. ADP-binding residues include Thr-265 and Gly-308. ATP contacts are provided by Thr-265, Gly-308, Gln-312, and Gly-411. Gly-411 lines the ADP pocket.

The protein belongs to the FGGY kinase family.

It catalyses the reaction glycerol + ATP = sn-glycerol 3-phosphate + ADP + H(+). Its pathway is polyol metabolism; glycerol degradation via glycerol kinase pathway; sn-glycerol 3-phosphate from glycerol: step 1/1. Inhibited by fructose 1,6-bisphosphate (FBP). Functionally, key enzyme in the regulation of glycerol uptake and metabolism. Catalyzes the phosphorylation of glycerol to yield sn-glycerol 3-phosphate. This is Glycerol kinase from Rhizobium meliloti (strain 1021) (Ensifer meliloti).